The sequence spans 381 residues: MASGSMATSEEERSLRECELYVQKHNIQALLKDSIVQLCTTRPERPMAFLREYFERLEKEEARQIQCLQKTGIRTDSREDEISPPPPNPVVKGRRRRGAISAEVYTEEDAASYVRKVIPKDYKTMAALAKAIEKNVLFSHLDDNERSDIFDAMFPVSFIAGETVIQQGDEGDNFYVIDQGEMDVYVNNEWATSVGEGGSFGELALIYGTPRAATVKAKTNVKLWGIDRDSYRRILMGSTLRKRKMYEEFLSKVSILESLDKWERLTVADALEPVQFEDGQKIVVQGEPGDEFFIILEGTAAVLQRRSENEEFVEVGRLGPSDYFGEIALLMNRPRAATVVARGPLKCVKLDRPRFERVLGPCSDILKRNIQQYNSFVSLSV.

Met-1 is subject to N-acetylmethionine. Position 2 is an N-acetylalanine; in cAMP-dependent protein kinase type I-alpha regulatory subunit, N-terminally processed (Ala-2). Positions 2–136 (ASGSMATSEE…ALAKAIEKNV (135 aa)) are dimerization and phosphorylation. Phosphoserine is present on Ser-3. Residues 73-96 (IRTDSREDEISPPPPNPVVKGRRR) form a disordered region. A Phosphothreonine modification is found at Thr-75. Residues Ser-77 and Ser-83 each carry the phosphoserine modification. The Pseudophosphorylation motif signature appears at 96–100 (RRGAI). Ser-101 is modified (phosphoserine). 3',5'-cyclic AMP-binding positions include 137–254 (LFSH…SKVS), Glu-202, Arg-211, 255–381 (ILES…SLSV), Glu-326, and Arg-335. The residue at position 258 (Ser-258) is a Phosphoserine.

It belongs to the cAMP-dependent kinase regulatory chain family. As to quaternary structure, the inactive holoenzyme is composed of two regulatory chains and two catalytic chains. Activation by cAMP releases the two active catalytic monomers and the regulatory dimer. Interacts with PRKACA and PRKACB. PRKAR1A also interacts with RFC2; the complex may be involved in cell survival. Interacts with AKAP4. Interacts with RARA; the interaction occurs in the presence of cAMP or FSH and regulates RARA transcriptional activity. Interacts with the phosphorylated form of PJA2. Interacts with PRKX; regulates this cAMP-dependent protein kinase. Interacts with CBFA2T3. Interacts with smAKAP; this interaction may target PRKAR1A to the plasma membrane. Interacts with AICDA. The pseudophosphorylation site binds to the substrate-binding region of the catalytic chain, resulting in the inhibition of its activity.

Its subcellular location is the cell membrane. Its function is as follows. Regulatory subunit of the cAMP-dependent protein kinases involved in cAMP signaling in cells. The sequence is that of cAMP-dependent protein kinase type I-alpha regulatory subunit (Prkar1a) from Mus musculus (Mouse).